Reading from the N-terminus, the 375-residue chain is Anhydro-N-acetylmuramic acid kinase (375 aa).

Position 12-19 (12-19 (GTSLDGVD)) interacts with ATP.

This sequence belongs to the anhydro-N-acetylmuramic acid kinase family.

It catalyses the reaction 1,6-anhydro-N-acetyl-beta-muramate + ATP + H2O = N-acetyl-D-muramate 6-phosphate + ADP + H(+). It participates in amino-sugar metabolism; 1,6-anhydro-N-acetylmuramate degradation. It functions in the pathway cell wall biogenesis; peptidoglycan recycling. Functionally, catalyzes the specific phosphorylation of 1,6-anhydro-N-acetylmuramic acid (anhMurNAc) with the simultaneous cleavage of the 1,6-anhydro ring, generating MurNAc-6-P. Is required for the utilization of anhMurNAc either imported from the medium or derived from its own cell wall murein, and thus plays a role in cell wall recycling. The chain is Anhydro-N-acetylmuramic acid kinase from Mannheimia succiniciproducens (strain KCTC 0769BP / MBEL55E).